A 772-amino-acid polypeptide reads, in one-letter code: Polyribonucleotide nucleotidyltransferase (772 aa).

D486 and D492 together coordinate Mg(2+). Residues P553 to I612 form the KH domain. One can recognise an S1 motif domain in the interval G622–R690. Positions E695–D772 are disordered. Basic and acidic residues predominate over residues E701 to A760.

The protein belongs to the polyribonucleotide nucleotidyltransferase family. Mg(2+) is required as a cofactor.

Its subcellular location is the cytoplasm. The enzyme catalyses RNA(n+1) + phosphate = RNA(n) + a ribonucleoside 5'-diphosphate. In terms of biological role, involved in mRNA degradation. Catalyzes the phosphorolysis of single-stranded polyribonucleotides processively in the 3'- to 5'-direction. The polypeptide is Polyribonucleotide nucleotidyltransferase (Novosphingobium aromaticivorans (strain ATCC 700278 / DSM 12444 / CCUG 56034 / CIP 105152 / NBRC 16084 / F199)).